Consider the following 273-residue polypeptide: Homeobox protein Nkx-2.2 (273 aa).

Disordered regions lie at residues 1 to 56 (MSLT…LDAV) and 91 to 131 (AASA…KRKR). Positions 20-38 (DTNDEEGSVAEGPEEESEG) are enriched in acidic residues. A DNA-binding region (homeobox) is located at residues 128 to 187 (KRKRRVLFSKAQTYELERRFRQQRYLSAPEREHLASLIRLTPTQVKIWFQNHRYKMKRAR).

The protein belongs to the NK-2 homeobox family. As to quaternary structure, interacts with OLIG2.

The protein resides in the nucleus. Transcriptional activator involved in the development of insulin-producting beta cells in the endocrine pancreas. May also be involved in specifying diencephalic neuromeric boundaries, and in controlling the expression of genes that play a role in axonal guidance. Binds to elements within the NEUROD1 promoter. The sequence is that of Homeobox protein Nkx-2.2 (NKX2-2) from Mesocricetus auratus (Golden hamster).